Reading from the N-terminus, the 226-residue chain is Ribose-5-phosphate isomerase A (226 aa).

Substrate is bound by residues 33 to 36 (TGST), 86 to 89 (DGAD), and 99 to 102 (KGGG). Glutamate 108 serves as the catalytic Proton acceptor. A substrate-binding site is contributed by lysine 126.

This sequence belongs to the ribose 5-phosphate isomerase family. Homodimer.

It carries out the reaction aldehydo-D-ribose 5-phosphate = D-ribulose 5-phosphate. It participates in carbohydrate degradation; pentose phosphate pathway; D-ribose 5-phosphate from D-ribulose 5-phosphate (non-oxidative stage): step 1/1. Functionally, catalyzes the reversible conversion of ribose-5-phosphate to ribulose 5-phosphate. This is Ribose-5-phosphate isomerase A from Bordetella pertussis (strain Tohama I / ATCC BAA-589 / NCTC 13251).